The sequence spans 83 residues: UPF0297 protein CKR_1221 (83 aa).

Belongs to the UPF0297 family.

The sequence is that of UPF0297 protein CKR_1221 from Clostridium kluyveri (strain NBRC 12016).